Consider the following 298-residue polypeptide: Protoheme IX farnesyltransferase (298 aa).

9 consecutive transmembrane segments (helical) span residues 23–43 (LLLL…GKPY), 47–67 (LVVL…NMYF), 93–113 (VFIA…RIIN), 115–135 (HFAL…TYLL), 143–163 (IIAG…AAAG), 169–189 (ALLF…FLAT), 211–231 (IAVA…IVGL), 236–256 (VIGT…FHLA), and 278–298 (MMLG…YIIS).

It belongs to the UbiA prenyltransferase family. Protoheme IX farnesyltransferase subfamily.

It localises to the cell membrane. It carries out the reaction heme b + (2E,6E)-farnesyl diphosphate + H2O = Fe(II)-heme o + diphosphate. It participates in porphyrin-containing compound metabolism; heme O biosynthesis; heme O from protoheme: step 1/1. Its function is as follows. Converts heme B (protoheme IX) to heme O by substitution of the vinyl group on carbon 2 of heme B porphyrin ring with a hydroxyethyl farnesyl side group. This chain is Protoheme IX farnesyltransferase, found in Hyperthermus butylicus (strain DSM 5456 / JCM 9403 / PLM1-5).